The following is a 202-amino-acid chain: Cyclin-U4-1 (202 aa).

This sequence belongs to the cyclin family. Cyclin U/P subfamily. As to quaternary structure, interacts with CDKA-1. Expressed in roots, stems and flowers. Expressed in the shoot apex, leaf primordia and young leaves.

This chain is Cyclin-U4-1 (CYCU4-1), found in Arabidopsis thaliana (Mouse-ear cress).